Reading from the N-terminus, the 20-residue chain is Antifungal protein J (20 aa).

Its subcellular location is the vacuole. Its function is as follows. Inhibitor of serine proteases chymotrypsin, pepsin and trypsin. Has strong antifungal activity against the human pathogenic fungi C.albicans TIMM 1768, S.cerevisiae KCTC 7296 and T.beigelli KCTC 7707, but lacks antifungal activity against the plant pathogenic fungi C.gloeosporioides KACC 40003, C.coccodes KACC 40803 and D.bryoniae KACC 40669. Lacks hemolytic activity against human erythrocytes. The chain is Antifungal protein J from Solanum tuberosum (Potato).